A 424-amino-acid polypeptide reads, in one-letter code: GTPase Obg (424 aa).

In terms of domain architecture, Obg spans 1–158; that stretch reads MFIDTAKIFV…RWIKLELKLL (158 aa). In terms of domain architecture, OBG-type G spans 159-331; the sequence is ADVGLIGFPN…LMKEAARLLS (173 aa). Residues 165–172, 190–194, 212–215, 282–285, and 312–314 each bind GTP; these read GFPNVGKS, FTTLK, DIPG, NKSD, and SAA. Mg(2+) is bound by residues S172 and T192. In terms of domain architecture, OCT spans 345-424; that stretch reads RFIEEEKRFT…LNDFEFDFLL (80 aa).

This sequence belongs to the TRAFAC class OBG-HflX-like GTPase superfamily. OBG GTPase family. Monomer. The cofactor is Mg(2+).

It localises to the cytoplasm. In terms of biological role, an essential GTPase which binds GTP, GDP and possibly (p)ppGpp with moderate affinity, with high nucleotide exchange rates and a fairly low GTP hydrolysis rate. Plays a role in control of the cell cycle, stress response, ribosome biogenesis and in those bacteria that undergo differentiation, in morphogenesis control. The protein is GTPase Obg of Clostridium botulinum (strain ATCC 19397 / Type A).